Here is a 230-residue protein sequence, read N- to C-terminus: Large ribosomal subunit protein uL1 (230 aa).

The protein belongs to the universal ribosomal protein uL1 family. In terms of assembly, part of the 50S ribosomal subunit.

Its function is as follows. Binds directly to 23S rRNA. The L1 stalk is quite mobile in the ribosome, and is involved in E site tRNA release. Functionally, protein L1 is also a translational repressor protein, it controls the translation of the L11 operon by binding to its mRNA. The polypeptide is Large ribosomal subunit protein uL1 (Ligilactobacillus salivarius (strain UCC118) (Lactobacillus salivarius)).